The chain runs to 139 residues: uncharacterized protein (139 aa).

The next 2 membrane-spanning stretches (helical) occupy residues 35–55 (AYFK…AAAA) and 119–139 (CCLF…VFCV).

It localises to the membrane. This is an uncharacterized protein from Saccharomyces cerevisiae (strain ATCC 204508 / S288c) (Baker's yeast).